Consider the following 323-residue polypeptide: Glucokinase (323 aa).

8–13 (GDVGGT) contacts ATP.

This sequence belongs to the bacterial glucokinase family.

It is found in the cytoplasm. It carries out the reaction D-glucose + ATP = D-glucose 6-phosphate + ADP + H(+). The protein is Glucokinase of Yersinia enterocolitica serotype O:8 / biotype 1B (strain NCTC 13174 / 8081).